We begin with the raw amino-acid sequence, 215 residues long: Protein-L-isoaspartate O-methyltransferase (215 aa).

Residue Ser-62 is part of the active site.

Belongs to the methyltransferase superfamily. L-isoaspartyl/D-aspartyl protein methyltransferase family.

The protein localises to the cytoplasm. The catalysed reaction is [protein]-L-isoaspartate + S-adenosyl-L-methionine = [protein]-L-isoaspartate alpha-methyl ester + S-adenosyl-L-homocysteine. In terms of biological role, catalyzes the methyl esterification of L-isoaspartyl residues in peptides and proteins that result from spontaneous decomposition of normal L-aspartyl and L-asparaginyl residues. It plays a role in the repair and/or degradation of damaged proteins. In Ruegeria sp. (strain TM1040) (Silicibacter sp.), this protein is Protein-L-isoaspartate O-methyltransferase.